Consider the following 336-residue polypeptide: Transmembrane protein 120A (336 aa).

Topologically, residues 1–131 (MNSPALQDCV…KQSKFAYKDE (131 aa)) are cytoplasmic. CoA is bound at residue lysine 129. A helical transmembrane segment spans residues 132 to 151 (YEKFKLYLTMILMVLSFICR). At 152 to 157 (FVLNSR) the chain is on the extracellular side. The chain crosses the membrane as a helical span at residues 158–176 (VTDAVFNFLLVWYYCTLTI). At 177–189 (RESILINNGSRIK) the chain is on the cytoplasmic side. The CoA site is built by serine 186 and arginine 187. Residues 190–208 (GWWVLNHYISTFLSGVMLT) form a helical membrane-spanning segment. Residues 209-217 (WPDGLMYQM) are Extracellular-facing. A helical membrane pass occupies residues 218 to 239 (FRNQFLSFSMYQSFVQFLQYYY). CoA-binding residues include glutamine 236, tyrosine 239, and glutamine 240. Residues 240–269 (QSGCLYRLRALGERHNMDLTVEGFQSWMWR) lie on the Cytoplasmic side of the membrane. A helical membrane pass occupies residues 270-293 (GLTFLLPFLFFGQFWQLYNAITLF). The Extracellular portion of the chain corresponds to 294–303 (KLARHPECKE). Residues 304–329 (WQVIMCGLPFLVHFLGNFFTTLRVVH) traverse the membrane as a helical segment. Over 330-336 (QKFQKQN) the chain is Cytoplasmic. Lysine 331 provides a ligand contact to CoA.

Belongs to the TMEM120 family. Homodimer.

Its subcellular location is the cell membrane. The protein localises to the nucleus inner membrane. The protein resides in the endoplasmic reticulum. Functionally, multifunctional protein involved in mechanosensation, and plays an essential role in lipid metabolism. May function as a potential ion channel involved in sensing mechanical stimuli. TMEM120A is structurally similar to a lipid-modifying enzyme, ELOVL7, and contains a bound coenzyme A molecule, which suggests it might function as an enzyme in lipid metabolism. This Xenopus tropicalis (Western clawed frog) protein is Transmembrane protein 120A.